The chain runs to 531 residues: MTETGVIGCGCRGVTGGNFFHPGGFSLKSCFLEQSTKRNRNFFRSVSMIPPFKRGRFITKLRSVAGNSRIFSMDAREKSRSFVLVSSRHKRVPVFVMMPIDTFGIDASGCPKIKRLKALTVSLKALKLAGVHGIAVEVWWGIVERFSPLEFKWSLYEELFRLISEAGLKLHVALCFHSNMHLFGGKGGISLPLWIREIGDVNKDIYYRDKSGFSNNDYLTLGVDQLPLFGGRTAVQCYEDFMLSFSTKFEPYLGNVIEEISIGLGPSGELRYPAHPSGDGRWKFPGIGEFQCHDKYMMEDLMAVASQEGKPQWGSRDPPNTGCYNSFPSGVPFFEEGNDSFLSDYGRFFLEWYSGKLICHADAILAKAADVLRRRQEEEKSSVMLVAKIGGIYWWYKTSSHPAELTAGYYNTSLRDGYDPVASVLSRHGAALNIPCLDMADSEIPEKYLCSPEGLRRQIHDVSKKWTIHVTGRNTSERFDEMGLRQIRENCVQPNGDTLRSFTFCRMNEKIFRVENWNNFVPFIRQMSADM.

The transit peptide at 1–62 (MTETGVIGCG…KRGRFITKLR (62 aa)) directs the protein to the chloroplast.

It belongs to the glycosyl hydrolase 14 family. As to expression, preferentially expressed in vascular tissue of cotyledons, leaves, petioles, stems, petals, siliques and roots, particularly in phloem. Also present in root tip.

It localises to the plastid. It is found in the chloroplast. No alpha-1,4-glucan hydrolase activity, including beta-amylase, alpha-amylase, a-glucosidase or alpha-amyloglucosidase. However, facilitates or regulates starch breakdown, especially at night, by a mechanism involving direct interaction with starch or other alpha-1,4-glucan. The protein is Inactive beta-amylase 4, chloroplastic (BAM4) of Arabidopsis thaliana (Mouse-ear cress).